The primary structure comprises 230 residues: MGEEGFLAHFAFSIGGLPITQSVLTTWFIMISLFIMAWSTTYKCSLLQPSTYQLIWEGVLSTMYDAIKEVLPEHVELIFPFVATLWIFILVSNLIGVIPGFYSPTADLSVTASLAIMTFLSVHWFGIRAEGWREYLKHYIKPTPFLLPFHLISEISRTLALAVRLFGNIMSLQLTALIVLMIAGFLVPIPILILHIIEAIIQAYIFGMLALIYIAGGIQAHELKSQGESL.

The next 5 helical transmembrane spans lie at 17–37 (LPIT…FIMA), 78–98 (IFPF…IGVI), 107–127 (DLSV…WFGI), 165–187 (LFGN…GFLV), and 198–218 (EAII…AGGI).

It belongs to the ATPase A chain family. In terms of assembly, F-type ATPases have 2 components, CF(1) - the catalytic core - and CF(0) - the membrane proton channel. CF(1) has five subunits: alpha(3), beta(3), gamma(1), delta(1), epsilon(1). CF(0) has three main subunits: a(1), b(2) and c(9-12). The alpha and beta chains form an alternating ring which encloses part of the gamma chain. CF(1) is attached to CF(0) by a central stalk formed by the gamma and epsilon chains, while a peripheral stalk is formed by the delta and b chains.

The protein resides in the cell inner membrane. In terms of biological role, key component of the proton channel; it plays a direct role in the translocation of protons across the membrane. This Legionella pneumophila subsp. pneumophila (strain Philadelphia 1 / ATCC 33152 / DSM 7513) protein is ATP synthase subunit a.